Consider the following 487-residue polypeptide: 6-phosphogluconate dehydrogenase, decarboxylating 1, chloroplastic (487 aa).

Methionine 1 carries the N-acetylmethionine modification. NADP(+)-binding positions include 13–18 (GLAVMG), 36–38 (NRT), 80–82 (VKA), and asparagine 108. Substrate contacts are provided by residues asparagine 108 and 134 to 136 (SGG). Lysine 188 serves as the catalytic Proton acceptor. 191–192 (HN) contributes to the substrate binding site. Glutamate 195 (proton donor) is an active-site residue. Tyrosine 196, lysine 266, arginine 293, arginine 458, and histidine 464 together coordinate substrate.

The protein belongs to the 6-phosphogluconate dehydrogenase family. Forms homodimer. Forms heterodimers with PGD2 or PGD3.

It localises to the plastid. Its subcellular location is the chloroplast. The protein resides in the cytoplasm. It is found in the cytosol. The enzyme catalyses 6-phospho-D-gluconate + NADP(+) = D-ribulose 5-phosphate + CO2 + NADPH. It functions in the pathway carbohydrate degradation; pentose phosphate pathway; D-ribulose 5-phosphate from D-glucose 6-phosphate (oxidative stage): step 3/3. Catalyzes the oxidative decarboxylation of 6-phosphogluconate to ribulose 5-phosphate and CO(2), with concomitant reduction of NADP to NADPH. The chain is 6-phosphogluconate dehydrogenase, decarboxylating 1, chloroplastic from Arabidopsis thaliana (Mouse-ear cress).